Here is a 252-residue protein sequence, read N- to C-terminus: tRNA1(Val) (adenine(37)-N6)-methyltransferase (252 aa).

The protein belongs to the methyltransferase superfamily. tRNA (adenine-N(6)-)-methyltransferase family.

It is found in the cytoplasm. The enzyme catalyses adenosine(37) in tRNA1(Val) + S-adenosyl-L-methionine = N(6)-methyladenosine(37) in tRNA1(Val) + S-adenosyl-L-homocysteine + H(+). Specifically methylates the adenine in position 37 of tRNA(1)(Val) (anticodon cmo5UAC). In Proteus mirabilis (strain HI4320), this protein is tRNA1(Val) (adenine(37)-N6)-methyltransferase.